Reading from the N-terminus, the 383-residue chain is 8-amino-7-oxononanoate synthase (383 aa).

Residue Arg21 participates in substrate binding. 108–109 (GY) lines the pyridoxal 5'-phosphate pocket. His133 contributes to the substrate binding site. Pyridoxal 5'-phosphate contacts are provided by Ser179, His207, and Thr233. The residue at position 236 (Lys236) is an N6-(pyridoxal phosphate)lysine. A substrate-binding site is contributed by Thr350.

Belongs to the class-II pyridoxal-phosphate-dependent aminotransferase family. BioF subfamily. In terms of assembly, homodimer. Pyridoxal 5'-phosphate serves as cofactor.

The catalysed reaction is 6-carboxyhexanoyl-[ACP] + L-alanine + H(+) = (8S)-8-amino-7-oxononanoate + holo-[ACP] + CO2. The protein operates within cofactor biosynthesis; biotin biosynthesis. Functionally, catalyzes the decarboxylative condensation of pimeloyl-[acyl-carrier protein] and L-alanine to produce 8-amino-7-oxononanoate (AON), [acyl-carrier protein], and carbon dioxide. The sequence is that of 8-amino-7-oxononanoate synthase from Yersinia pestis bv. Antiqua (strain Angola).